A 21-amino-acid polypeptide reads, in one-letter code: Hemocyanin subunit 1 (21 aa).

This sequence belongs to the tyrosinase family. Hemocyanin subfamily. As to expression, hemolymph.

The protein resides in the secreted. The protein localises to the extracellular space. Its function is as follows. Hemocyanins are copper-containing oxygen carriers occurring freely dissolved in the hemolymph of many mollusks and arthropods. This is Hemocyanin subunit 1 from Maja squinado (Mediterranean spider crab).